Reading from the N-terminus, the 508-residue chain is Catalase (508 aa).

The first 21 residues, 1–21 (MHMSKSFLLISMGLASISVHA), serve as a signal peptide directing secretion. Active-site residues include histidine 72 and asparagine 145. Position 353 (tyrosine 353) interacts with heme. Residues 373-392 (PKSPVANHNQDGPSNNSTGL) show a composition bias toward polar residues. Residues 373–396 (PKSPVANHNQDGPSNNSTGLGNVD) are disordered.

The protein belongs to the catalase family. Heme is required as a cofactor.

It is found in the periplasm. It catalyses the reaction 2 H2O2 = O2 + 2 H2O. In terms of biological role, decomposes hydrogen peroxide into water and oxygen; serves to protect cells from the toxic effects of hydrogen peroxide. The protein is Catalase of Vibrio vulnificus (strain CMCP6).